The following is a 469-amino-acid chain: ATP synthase subunit beta (469 aa).

157–164 (GGAGVGKT) contributes to the ATP binding site.

The protein belongs to the ATPase alpha/beta chains family. In terms of assembly, F-type ATPases have 2 components, CF(1) - the catalytic core - and CF(0) - the membrane proton channel. CF(1) has five subunits: alpha(3), beta(3), gamma(1), delta(1), epsilon(1). CF(0) has three main subunits: a(1), b(2) and c(9-12). The alpha and beta chains form an alternating ring which encloses part of the gamma chain. CF(1) is attached to CF(0) by a central stalk formed by the gamma and epsilon chains, while a peripheral stalk is formed by the delta and b chains.

Its subcellular location is the cell membrane. It catalyses the reaction ATP + H2O + 4 H(+)(in) = ADP + phosphate + 5 H(+)(out). Its function is as follows. Produces ATP from ADP in the presence of a proton gradient across the membrane. The catalytic sites are hosted primarily by the beta subunits. The polypeptide is ATP synthase subunit beta (Brevibacillus brevis (strain 47 / JCM 6285 / NBRC 100599)).